A 209-amino-acid polypeptide reads, in one-letter code: uncharacterized protein (209 aa).

Residues 1–17 form the signal peptide; sequence MKKLVTGLLALSLFLAA. The interval 17–106 is disordered; that stretch reads ACGQDSDQQK…SGQTTNNQKS (90 aa). A lipid anchor (N-palmitoyl cysteine) is attached at Cys-18. Cys-18 carries the S-diacylglycerol cysteine lipid modification. Residues 23–70 are compositionally biased toward basic and acidic residues; sequence DQQKDSNKEKDDKAKTEQQDKKTNDSSKDKKDNKDDSKDVNKDNKDNS. A compositionally biased stretch (low complexity) spans 71 to 106; it reads ANDNQQQSNSNATNNDQNQTNNNQSNSGQTTNNQKS.

The protein localises to the cell membrane. This is an uncharacterized protein from Staphylococcus aureus (strain MRSA252).